Here is a 208-residue protein sequence, read N- to C-terminus: Large ribosomal subunit protein uL3 (208 aa).

The tract at residues 117 to 149 (FQGVIKRHGQSRGPMAHGSRYHRRPGSMGPVSP) is disordered.

Belongs to the universal ribosomal protein uL3 family. In terms of assembly, part of the 50S ribosomal subunit. Forms a cluster with proteins L14 and L19.

Functionally, one of the primary rRNA binding proteins, it binds directly near the 3'-end of the 23S rRNA, where it nucleates assembly of the 50S subunit. The chain is Large ribosomal subunit protein uL3 from Streptococcus equi subsp. equi (strain 4047).